We begin with the raw amino-acid sequence, 140 residues long: Cystatin-C (140 aa).

Positions 1 to 20 (MASPLRSLLFLLAVLAVAWA) are cleaved as a signal peptide. The Secondary area of contact motif lies at 75 to 79 (QLVAG). Cystine bridges form between Cys-93/Cys-103 and Cys-117/Cys-137.

It belongs to the cystatin family.

The protein localises to the secreted. Functionally, as an inhibitor of cysteine proteinases, this protein is thought to serve an important physiological role as a local regulator of this enzyme activity. This chain is Cystatin-C (Cst3), found in Mus musculus (Mouse).